The sequence spans 131 residues: Transcriptional activatory protein CaiF (131 aa).

In terms of biological role, potential transcriptional activator of carnitine metabolism. This is Transcriptional activatory protein CaiF (caiF) from Escherichia coli (strain K12).